Reading from the N-terminus, the 363-residue chain is MTNKTYKIAVLPGDGIGPEVMEQAHKVLDAIEKKHAISFSREQHDVGGIAIDNHGCPLPESTVKGCEESDAVLFGSVGGPKWEHLPPNDQPERGALLPLRKHFQLFCNLRPAQIHKGLENFSPLRADISERGFDIVVVRELTGGIYFGQPKGREGEGPQEKAYDTEIYHRYEIERIAKIAFESARLRNKNVYSIDKANVLQSSILWREVVEEVAKGYPDVTLNHMYIDNATMQLIKDPSQFDVMLCSNIFGDIISDECAMITGSMGMLPSASLNESNFGLYEPAGGSAPDIAGKNIANPVAQILSAALMLRYSLGEEEAAQSIEAAVSKALSAGELTADLAGDKPALTTSAMGDKIAEYILNS.

Residue 79-92 participates in NAD(+) binding; sequence GPKWEHLPPNDQPE. Substrate is bound by residues R100, R110, R139, and D228. 3 residues coordinate Mg(2+): D228, D252, and D256. 286 to 298 serves as a coordination point for NAD(+); that stretch reads GSAPDIAGKNIAN.

It belongs to the isocitrate and isopropylmalate dehydrogenases family. LeuB type 1 subfamily. As to quaternary structure, homodimer. Mg(2+) is required as a cofactor. It depends on Mn(2+) as a cofactor.

The protein localises to the cytoplasm. It catalyses the reaction (2R,3S)-3-isopropylmalate + NAD(+) = 4-methyl-2-oxopentanoate + CO2 + NADH. Its pathway is amino-acid biosynthesis; L-leucine biosynthesis; L-leucine from 3-methyl-2-oxobutanoate: step 3/4. Catalyzes the oxidation of 3-carboxy-2-hydroxy-4-methylpentanoate (3-isopropylmalate) to 3-carboxy-4-methyl-2-oxopentanoate. The product decarboxylates to 4-methyl-2 oxopentanoate. The protein is 3-isopropylmalate dehydrogenase of Aliivibrio fischeri (strain ATCC 700601 / ES114) (Vibrio fischeri).